The chain runs to 253 residues: Triosephosphate isomerase (253 aa).

8-10 (NWK) provides a ligand contact to substrate. Residue histidine 93 is the Electrophile of the active site. Glutamate 165 functions as the Proton acceptor in the catalytic mechanism. Substrate is bound by residues glycine 171, serine 210, and 231–232 (GG).

Belongs to the triosephosphate isomerase family. In terms of assembly, homodimer.

It localises to the cytoplasm. It catalyses the reaction D-glyceraldehyde 3-phosphate = dihydroxyacetone phosphate. The protein operates within carbohydrate biosynthesis; gluconeogenesis. Its pathway is carbohydrate degradation; glycolysis; D-glyceraldehyde 3-phosphate from glycerone phosphate: step 1/1. Its function is as follows. Involved in the gluconeogenesis. Catalyzes stereospecifically the conversion of dihydroxyacetone phosphate (DHAP) to D-glyceraldehyde-3-phosphate (G3P). This is Triosephosphate isomerase from Francisella tularensis subsp. holarctica (strain FTNF002-00 / FTA).